The following is a 330-amino-acid chain: Putative glycosyltransferase HI_0258 (330 aa).

Residues 1–31 (MTDRQTDRQTDRQTDRQTDRQTDRQTDRQTD) are compositionally biased toward basic and acidic residues. Residues 1 to 32 (MTDRQTDRQTDRQTDRQTDRQTDRQTDRQTDG) are disordered. UDP contacts are provided by residues 44–49 (SSDHYY) and 140–141 (DV). Mn(2+) contacts are provided by Asp140, Asp142, and His270. Residue 270–276 (HYCGPNK) participates in UDP binding.

It belongs to the glycosyltransferase 8 family.

This is Putative glycosyltransferase HI_0258 from Haemophilus influenzae (strain ATCC 51907 / DSM 11121 / KW20 / Rd).